The primary structure comprises 205 residues: Holliday junction branch migration complex subunit RuvA (205 aa).

The tract at residues 1-64 is domain I; it reads MIGRLRGIIL…EDAQLLFGFI (64 aa). Residues 65–143 are domain II; the sequence is HKQERVLFRE…GLSGDLFVPQ (79 aa). Positions 144–156 are flexible linker; the sequence is GAGEIPAAIDAPA. Residues 157–205 are domain III; that stretch reads MPADPEGEAVAALVALGYKPQEASRMVSKVASAGSDCEMLIRDALRAAL.

It belongs to the RuvA family. Homotetramer. Forms an RuvA(8)-RuvB(12)-Holliday junction (HJ) complex. HJ DNA is sandwiched between 2 RuvA tetramers; dsDNA enters through RuvA and exits via RuvB. An RuvB hexamer assembles on each DNA strand where it exits the tetramer. Each RuvB hexamer is contacted by two RuvA subunits (via domain III) on 2 adjacent RuvB subunits; this complex drives branch migration. In the full resolvosome a probable DNA-RuvA(4)-RuvB(12)-RuvC(2) complex forms which resolves the HJ.

The protein resides in the cytoplasm. Its function is as follows. The RuvA-RuvB-RuvC complex processes Holliday junction (HJ) DNA during genetic recombination and DNA repair, while the RuvA-RuvB complex plays an important role in the rescue of blocked DNA replication forks via replication fork reversal (RFR). RuvA specifically binds to HJ cruciform DNA, conferring on it an open structure. The RuvB hexamer acts as an ATP-dependent pump, pulling dsDNA into and through the RuvAB complex. HJ branch migration allows RuvC to scan DNA until it finds its consensus sequence, where it cleaves and resolves the cruciform DNA. This chain is Holliday junction branch migration complex subunit RuvA, found in Sodalis glossinidius (strain morsitans).